The sequence spans 115 residues: Evasin P1182 (115 aa).

The first 26 residues, 1–26 (MALNWSFRVIFVSTMWCALLKFATLG), serve as a signal peptide directing secretion. 4 disulfide bridges follow: cysteine 38–cysteine 58, cysteine 54–cysteine 94, cysteine 70–cysteine 99, and cysteine 89–cysteine 108. 3 N-linked (GlcNAc...) asparagine glycosylation sites follow: asparagine 45, asparagine 72, and asparagine 103.

The protein resides in the secreted. Functionally, salivary chemokine-binding protein which binds to host chemokines CCL2, CCL3, CCL4, CCL8 and CCL18. The polypeptide is Evasin P1182 (Amblyomma maculatum (Gulf Coast tick)).